The sequence spans 805 residues: Phenylalanine--tRNA ligase beta subunit (805 aa).

The region spanning 39–148 (APPFTGVVVT…AALRPGTDIR (110 aa)) is the tRNA-binding domain. The B5 domain occupies 399–474 (PVREPVRMRL…RVYGFERIPD (76 aa)). Mg(2+) is bound by residues Asp-452, Asp-458, Glu-461, and Glu-462. One can recognise an FDX-ACB domain in the interval 703-804 (SRQPVVVRDL…LVAAHNARQR (102 aa)).

This sequence belongs to the phenylalanyl-tRNA synthetase beta subunit family. Type 1 subfamily. Tetramer of two alpha and two beta subunits. It depends on Mg(2+) as a cofactor.

It localises to the cytoplasm. It catalyses the reaction tRNA(Phe) + L-phenylalanine + ATP = L-phenylalanyl-tRNA(Phe) + AMP + diphosphate + H(+). The sequence is that of Phenylalanine--tRNA ligase beta subunit from Bordetella pertussis (strain Tohama I / ATCC BAA-589 / NCTC 13251).